The following is a 219-amino-acid chain: Eukaryotic translation initiation factor 3 subunit J (219 aa).

Over residues 22 to 40 the composition is skewed to acidic residues; that stretch reads VDAWDASSEDEVEKVEEEI. Positions 22–47 are disordered; that stretch reads VDAWDASSEDEVEKVEEEIKEPPKPV. Residues 48–100 adopt a coiled-coil conformation; that stretch reads VKQLTKKQALQRAIELKEKELKEPQGDFDIYLEEKRKKELQEASDLENSKNLF.

Belongs to the eIF-3 subunit J family. Component of the eukaryotic translation initiation factor 3 (eIF-3) complex.

It localises to the cytoplasm. In terms of biological role, component of the eukaryotic translation initiation factor 3 (eIF-3) complex, which is involved in protein synthesis of a specialized repertoire of mRNAs and, together with other initiation factors, stimulates binding of mRNA and methionyl-tRNAi to the 40S ribosome. The eIF-3 complex specifically targets and initiates translation of a subset of mRNAs involved in cell proliferation. The chain is Eukaryotic translation initiation factor 3 subunit J (eif3J) from Dictyostelium discoideum (Social amoeba).